Here is a 395-residue protein sequence, read N- to C-terminus: Elongation factor Tu (395 aa).

Positions 10–204 (KPHVNIGTIG…AVDSYIPTPE (195 aa)) constitute a tr-type G domain. The interval 19-26 (GHVDHGKT) is G1. 19–26 (GHVDHGKT) contacts GTP. Residue Thr26 participates in Mg(2+) binding. The G2 stretch occupies residues 60 to 64 (GITIS). The tract at residues 81–84 (DCPG) is G3. GTP-binding positions include 81-85 (DCPGH) and 136-139 (NKCD). The interval 136 to 139 (NKCD) is G4. The interval 174–176 (SAL) is G5.

This sequence belongs to the TRAFAC class translation factor GTPase superfamily. Classic translation factor GTPase family. EF-Tu/EF-1A subfamily. In terms of assembly, monomer. Phosphorylated on serine and/or threonine residue(s). Dephosphorylated by stp.

The protein localises to the cytoplasm. It carries out the reaction GTP + H2O = GDP + phosphate + H(+). Functionally, GTP hydrolase that promotes the GTP-dependent binding of aminoacyl-tRNA to the A-site of ribosomes during protein biosynthesis. The chain is Elongation factor Tu from Listeria innocua serovar 6a (strain ATCC BAA-680 / CLIP 11262).